The sequence spans 408 residues: Acetate kinase (408 aa).

Residue asparagine 7 coordinates Mg(2+). Lysine 14 is a binding site for ATP. Arginine 91 is a binding site for substrate. Aspartate 148 serves as the catalytic Proton donor/acceptor. ATP contacts are provided by residues 208-212 (HLGNG), 283-285 (DFR), and 331-335 (GIGEN). Residue glutamate 384 participates in Mg(2+) binding.

The protein belongs to the acetokinase family. As to quaternary structure, homodimer. It depends on Mg(2+) as a cofactor. Requires Mn(2+) as cofactor.

It is found in the cytoplasm. The enzyme catalyses acetate + ATP = acetyl phosphate + ADP. The protein operates within metabolic intermediate biosynthesis; acetyl-CoA biosynthesis; acetyl-CoA from acetate: step 1/2. Its function is as follows. Catalyzes the formation of acetyl phosphate from acetate and ATP. Can also catalyze the reverse reaction. This chain is Acetate kinase, found in Methanosarcina mazei (Methanosarcina frisia).